The sequence spans 590 residues: Negative elongation factor C/D (590 aa).

Residues 16–43 (GSAAEWGDEADGGQQEDDSGEGEDDAEV) form a disordered region. Over residues 21–43 (WGDEADGGQQEDDSGEGEDDAEV) the composition is skewed to acidic residues.

Belongs to the NELF-D family. As to quaternary structure, the NELF complex is composed of NELFA, NELFB, NELFCD (isoform NELF-C or isoform NELF-D) and NELFE; NELFA and NELFCD form a stable subcomplex that binds primarily through NELFCD to the N-terminus of NELFB. Binds RNA which may help to stabilize the NELF complex on nucleic acid. In vitro, the NELFA:NELFCD subcomplex binds to ssDNA and ssRNA in a sequence- and structure-dependent manner. Interacts with ARAF. Interacts with PCF11. Interacts with KAT8. In terms of tissue distribution, widely expressed. Expressed in heart, brain, lung, placenta, liver, skeletal and cardiac muscle, adrenal, thyroid, kidney and pancreas.

The protein resides in the nucleus. Essential component of the NELF complex, a complex that negatively regulates the elongation of transcription by RNA polymerase II. The NELF complex, which acts via an association with the DSIF complex and causes transcriptional pausing, is counteracted by the P-TEFb kinase complex. Functionally, (Microbial infection) The NELF complex is involved in HIV-1 latency possibly involving recruitment of PCF11 to paused RNA polymerase II. This chain is Negative elongation factor C/D (NELFCD), found in Homo sapiens (Human).